The primary structure comprises 1155 residues: Polarized growth protein rax2 (1155 aa).

The N-terminal stretch at Met1–Ala27 is a signal peptide. The Extracellular segment spans residues Ser28–Tyr1105. Asn44, Asn61, Asn103, Asn118, Asn124, Asn156, Asn161, Asn182, Asn190, Asn213, Asn224, Asn306, Asn391, Asn413, Asn419, Asn510, Asn519, Asn554, Asn562, Asn607, Asn630, Asn713, Asn722, Asn743, Asn769, Asn793, Asn807, Asn824, Asn840, Asn848, Asn876, Asn893, Asn899, Asn916, Asn945, Asn1009, Asn1030, and Asn1055 each carry an N-linked (GlcNAc...) asparagine glycan. The helical transmembrane segment at Val1106–Ile1126 threads the bilayer. Topologically, residues Val1127–Gln1155 are cytoplasmic.

It belongs to the RAX2 family. Interacts with for3 and tea1.

Its subcellular location is the cell membrane. In terms of biological role, controls cell polarity, through the G1 phase of mitosis, via regulation of for3 localization. Required for actin cable formation where it directs the spatial distribution of the actin cables. The chain is Polarized growth protein rax2 from Schizosaccharomyces pombe (strain 972 / ATCC 24843) (Fission yeast).